Consider the following 66-residue polypeptide: Large ribosomal subunit protein bL35 (66 aa).

Positions 1 to 16 (MPKQKTHRASAKRFKR) are enriched in basic residues. A disordered region spans residues 1 to 22 (MPKQKTHRASAKRFKRTGSGGL).

It belongs to the bacterial ribosomal protein bL35 family.

This Streptococcus suis (strain 05ZYH33) protein is Large ribosomal subunit protein bL35.